The chain runs to 85 residues: Sugar transporter SemiSWEET (85 aa).

The 58-residue stretch at 2 to 59 folds into the PQ-loop domain; sequence ENLIGYVAAFLTTVSFLPQVLRVVMTKQTRDISRNMYIMFFLGVVLWFVYGILRSDLP. 3 consecutive transmembrane segments (helical) span residues 5–25, 33–53, and 57–77; these read IGYVAAFLTTVSFLPQVLRVV, ISRNMYIMFFLGVVLWFVYGI, and DLPIILANVVTLFFVTIILYY.

As to quaternary structure, homodimer.

Its subcellular location is the cell membrane. The homodimer mediates transmembrane sugar transport down a concentration gradient. Transport is probably effected by rocking-type movements, where a cargo-binding cavity opens first on one and then on the other side of the membrane. This chain is Sugar transporter SemiSWEET, found in Leptospira biflexa serovar Patoc (strain Patoc 1 / ATCC 23582 / Paris).